Reading from the N-terminus, the 1108-residue chain is Multidrug resistance regulator 1 (1108 aa).

A compositionally biased stretch (polar residues) spans 1–19 (MSIATTPIETPKSPKSTEP). Residues 1 to 27 (MSIATTPIETPKSPKSTEPQVRKRKKV) are disordered. Positions 31–59 (CTNCRKRKIRCDRQHPCNNCIKSKKHNAC) form a DNA-binding region, zn(2)-C6 fungal-type. The span at 68-83 (PANFSTNGSSHGNTVP) shows a compositional bias: polar residues. 3 disordered regions span residues 68 to 138 (PANF…SENE), 968 to 990 (DQTYSTSSESSSTPNKDSPLDSR), and 1021 to 1064 (AQQQ…YYGN). 2 stretches are compositionally biased toward basic and acidic residues: residues 86-104 (RPYEESARIPIRFDAEAPR) and 114-123 (NERKNSKKSP). Positions 124–138 (DNTVANNQQTASENE) are enriched in polar residues. Residues 134-165 (ASENEVTITLSELNMLKQRLQNIEANINAQSN) adopt a coiled-coil conformation. 2 stretches are compositionally biased toward low complexity: residues 970–980 (TYSTSSESSST) and 1023–1041 (QQRQQESQPFTSSQSQSQS).

It localises to the nucleus. Functionally, transcription factor that acts as the central regulator of the MDR1 efflux pump. Other target genes include those encoding oxidoreductases, whose up-regulation in fluconazole-resistant isolates may help to prevent cell damage resulting from the generation of toxic molecules in the presence of fluconazole and thereby contribute to drug resistance. In Candida albicans (strain SC5314 / ATCC MYA-2876) (Yeast), this protein is Multidrug resistance regulator 1.